Consider the following 389-residue polypeptide: S-adenosylmethionine synthase (389 aa).

H15 serves as a coordination point for ATP. D17 lines the Mg(2+) pocket. E43 contributes to the K(+) binding site. The L-methionine site is built by E56 and Q99. The interval Q99–H109 is flexible loop. Residues D166–K168, R232–F233, D241, R247–K248, S264, and K268 each bind ATP. Residue D241 participates in L-methionine binding. K272 is a binding site for L-methionine.

The protein belongs to the AdoMet synthase family. As to quaternary structure, homotetramer; dimer of dimers. The cofactor is Mg(2+). K(+) serves as cofactor.

Its subcellular location is the cytoplasm. The enzyme catalyses L-methionine + ATP + H2O = S-adenosyl-L-methionine + phosphate + diphosphate. It participates in amino-acid biosynthesis; S-adenosyl-L-methionine biosynthesis; S-adenosyl-L-methionine from L-methionine: step 1/1. Functionally, catalyzes the formation of S-adenosylmethionine (AdoMet) from methionine and ATP. The overall synthetic reaction is composed of two sequential steps, AdoMet formation and the subsequent tripolyphosphate hydrolysis which occurs prior to release of AdoMet from the enzyme. The chain is S-adenosylmethionine synthase from Blochmanniella pennsylvanica (strain BPEN).